The primary structure comprises 165 residues: NADPH-dependent 7-cyano-7-deazaguanine reductase (165 aa).

Cysteine 56 serves as the catalytic Thioimide intermediate. Aspartate 63 (proton donor) is an active-site residue. Residues 78-80 and 97-98 each bind substrate; these read VES and HE.

The protein belongs to the GTP cyclohydrolase I family. QueF type 1 subfamily.

It is found in the cytoplasm. It catalyses the reaction 7-aminomethyl-7-carbaguanine + 2 NADP(+) = 7-cyano-7-deazaguanine + 2 NADPH + 3 H(+). Its pathway is tRNA modification; tRNA-queuosine biosynthesis. In terms of biological role, catalyzes the NADPH-dependent reduction of 7-cyano-7-deazaguanine (preQ0) to 7-aminomethyl-7-deazaguanine (preQ1). The polypeptide is NADPH-dependent 7-cyano-7-deazaguanine reductase (Bacillus anthracis (strain A0248)).